The primary structure comprises 227 residues: UPF0173 metal-dependent hydrolase SSO0099 (227 aa).

The protein belongs to the UPF0173 family.

This Saccharolobus solfataricus (strain ATCC 35092 / DSM 1617 / JCM 11322 / P2) (Sulfolobus solfataricus) protein is UPF0173 metal-dependent hydrolase SSO0099.